Here is a 274-residue protein sequence, read N- to C-terminus: Ribosomal RNA small subunit methyltransferase A (274 aa).

Asparagine 26, leucine 28, glycine 53, glutamate 74, aspartate 94, and asparagine 114 together coordinate S-adenosyl-L-methionine.

Belongs to the class I-like SAM-binding methyltransferase superfamily. rRNA adenine N(6)-methyltransferase family. RsmA subfamily.

Its subcellular location is the cytoplasm. The enzyme catalyses adenosine(1518)/adenosine(1519) in 16S rRNA + 4 S-adenosyl-L-methionine = N(6)-dimethyladenosine(1518)/N(6)-dimethyladenosine(1519) in 16S rRNA + 4 S-adenosyl-L-homocysteine + 4 H(+). Specifically dimethylates two adjacent adenosines (A1518 and A1519) in the loop of a conserved hairpin near the 3'-end of 16S rRNA in the 30S particle. May play a critical role in biogenesis of 30S subunits. This chain is Ribosomal RNA small subunit methyltransferase A, found in Bdellovibrio bacteriovorus (strain ATCC 15356 / DSM 50701 / NCIMB 9529 / HD100).